The primary structure comprises 929 residues: Chitin synthase 1 (929 aa).

Gly residues predominate over residues 1 to 12 (MAYRGAGGPGGG). Disordered stretches follow at residues 1–43 (MAYR…QEDE) and 114–156 (MGGH…GGGL). 2 stretches are compositionally biased toward polar residues: residues 21 to 33 (QDLNPHSQYSNVQ) and 140 to 149 (SWVQRQNPNA). A glycan (N-linked (GlcNAc...) asparagine) is linked at Asn-560. 5 consecutive transmembrane segments (helical) span residues 587–607 (FFFHVQLIYNILNVIFTWFSL), 643–663 (LFNAVLKYIYLAFVILQFILA), 678–698 (SFFVFSVIQAYILVLSGYLVV), 730–750 (VILLALIAIYGIYFIASFMYL), and 758–778 (SFPYYMLLMSTYINILMVYAF). Asn-801 carries an N-linked (GlcNAc...) asparagine glycan. Helical transmembrane passes span 857–877 (TMLVVLWLFSNCLLAVAITSD) and 897–917 (FLLFSTAFLSLIRFIGFLWFL).

It belongs to the chitin synthase family. Class III subfamily.

It is found in the cell membrane. It catalyses the reaction [(1-&gt;4)-N-acetyl-beta-D-glucosaminyl](n) + UDP-N-acetyl-alpha-D-glucosamine = [(1-&gt;4)-N-acetyl-beta-D-glucosaminyl](n+1) + UDP + H(+). Its function is as follows. Polymerizes chitin, a structural polymer of the cell wall and septum, by transferring the sugar moiety of UDP-GlcNAc to the non-reducing end of the growing chitin polymer. CHS1 and CHS3 have compensatory functions in cell wall modifications in responses to stresses. Involved in appressoria formation and required for full virulence. In Pyricularia oryzae (strain 70-15 / ATCC MYA-4617 / FGSC 8958) (Rice blast fungus), this protein is Chitin synthase 1.